A 462-amino-acid polypeptide reads, in one-letter code: ATP synthase subunit beta 2 (462 aa).

G151 to T158 provides a ligand contact to ATP.

Belongs to the ATPase alpha/beta chains family. F-type ATPases have 2 components, CF(1) - the catalytic core - and CF(0) - the membrane proton channel. CF(1) has five subunits: alpha(3), beta(3), gamma(1), delta(1), epsilon(1). CF(0) has three main subunits: a(1), b(2) and c(9-12). The alpha and beta chains form an alternating ring which encloses part of the gamma chain. CF(1) is attached to CF(0) by a central stalk formed by the gamma and epsilon chains, while a peripheral stalk is formed by the delta and b chains.

It localises to the cell inner membrane. The catalysed reaction is ATP + H2O + 4 H(+)(in) = ADP + phosphate + 5 H(+)(out). In terms of biological role, produces ATP from ADP in the presence of a proton gradient across the membrane. The catalytic sites are hosted primarily by the beta subunits. The polypeptide is ATP synthase subunit beta 2 (Chlorobaculum tepidum (strain ATCC 49652 / DSM 12025 / NBRC 103806 / TLS) (Chlorobium tepidum)).